A 311-amino-acid polypeptide reads, in one-letter code: tRNA-cytidine(32) 2-sulfurtransferase (311 aa).

The PP-loop motif motif lies at Ser-45–Ser-50. Cys-120, Cys-123, and Cys-211 together coordinate [4Fe-4S] cluster.

It belongs to the TtcA family. Homodimer. Requires Mg(2+) as cofactor. The cofactor is [4Fe-4S] cluster.

The protein localises to the cytoplasm. The catalysed reaction is cytidine(32) in tRNA + S-sulfanyl-L-cysteinyl-[cysteine desulfurase] + AH2 + ATP = 2-thiocytidine(32) in tRNA + L-cysteinyl-[cysteine desulfurase] + A + AMP + diphosphate + H(+). The protein operates within tRNA modification. Functionally, catalyzes the ATP-dependent 2-thiolation of cytidine in position 32 of tRNA, to form 2-thiocytidine (s(2)C32). The sulfur atoms are provided by the cysteine/cysteine desulfurase (IscS) system. The chain is tRNA-cytidine(32) 2-sulfurtransferase from Shewanella pealeana (strain ATCC 700345 / ANG-SQ1).